We begin with the raw amino-acid sequence, 533 residues long: Thromboxane-A synthase (533 aa).

The Cytoplasmic portion of the chain corresponds to Met-1 to Glu-10. A helical membrane pass occupies residues Val-11–Tyr-31. The Lumenal portion of the chain corresponds to Ser-32–Gly-75. Residues Pro-76 to Ile-96 form a helical membrane-spanning segment. At Lys-97–Arg-223 the chain is on the cytoplasmic side. Residues Pro-224 to Pro-244 form a helical membrane-spanning segment. Over Asn-245–Ala-335 the chain is Lumenal. A helical transmembrane segment spans residues Phe-336–Leu-356. Over Leu-357–Arg-533 the chain is Cytoplasmic. Cys-479 is a heme binding site.

It belongs to the cytochrome P450 family. As to quaternary structure, monomer. Heme serves as cofactor.

The protein localises to the endoplasmic reticulum membrane. It carries out the reaction prostaglandin H2 = thromboxane A2. The enzyme catalyses prostaglandin H2 = (12S)-hydroxy-(5Z,8E,10E)-heptadecatrienoate + malonaldehyde. It catalyses the reaction a hydroperoxyeicosatetraenoate = an oxoeicosatetraenoate + H2O. The catalysed reaction is (15S)-hydroperoxy-(5Z,8Z,11Z,13E)-eicosatetraenoate = 15-oxo-(5Z,8Z,11Z,13E)-eicosatetraenoate + H2O. It carries out the reaction (15S)-hydroperoxy-(5Z,8Z,11Z,13E)-eicosatetraenoate + AH2 = (15S)-hydroxy-(5Z,8Z,11Z,13E)-eicosatetraenoate + A + H2O. Catalyzes the conversion of prostaglandin H2 (PGH2) to thromboxane A2 (TXA2), a potent inducer of blood vessel constriction and platelet aggregation. Also cleaves PGH2 to 12-hydroxy-heptadecatrienoicacid (12-HHT) and malondialdehyde, which is known to act as a mediator of DNA damage. 12-HHT and malondialdehyde are formed stoichiometrically in the same amounts as TXA2. Additionally, displays dehydratase activity, toward (15S)-hydroperoxy-(5Z,8Z,11Z,13E)-eicosatetraenoate (15(S)-HPETE) producing 15-KETE and 15-HETE. This chain is Thromboxane-A synthase (TBXAS1), found in Macaca fascicularis (Crab-eating macaque).